The following is a 660-amino-acid chain: Putative ABC transporter ATP-binding MG390 homolog (660 aa).

The Peptidase C39 domain occupies 6–126; that stretch reads QEQPNECGIC…KQWTGYAATV (121 aa). The active site involves C12. The next 6 helical transmembrane spans lie at 150-170, 188-208, 265-285, 290-310, 379-399, and 402-422; these read LIIF…LLAT, IVVF…LYAL, HIPN…LIGI, FLWI…YDFF, SFAQ…GIIE, and YTLA…AYAT. The ABC transporter domain occupies 464-660; it reads INLNNCSITL…INLSPYLQQT (197 aa). 494–501 is an ATP binding site; sequence GENGSGKS.

Belongs to the ABC transporter superfamily.

The protein localises to the cell membrane. The sequence is that of Putative ABC transporter ATP-binding MG390 homolog from Mycoplasma pneumoniae (strain ATCC 29342 / M129 / Subtype 1) (Mycoplasmoides pneumoniae).